Here is a 329-residue protein sequence, read N- to C-terminus: Stimulator of interferon genes protein (329 aa).

Residues 1–4 (MACV) lie on the Cytoplasmic side of the membrane. A helical transmembrane segment spans residues 5–25 (LAIGSILFVWILGKGKYSGAQ). A topological domain (lumenal) is located at residue leucine 26. A helical membrane pass occupies residues 27-52 (IYRMATNFAISQGCCLVTCACELTEE). Over 53-74 (IKHLHTRYNGHYWRALKASFNL) the chain is Cytoplasmic. Residues 75–88 (SCAAFVTAILCYVF) form a helical membrane-spanning segment. Over 89 to 98 (YEPKLMASLP) the chain is Lumenal. The chain crosses the membrane as a helical span at residues 99 to 116 (LTIDITLTLLSWLFCWIL). Residues 117–329 (GIQGPTPATI…QQHSEEYSML (213 aa)) are Cytoplasmic-facing. Positions 135–325 (LNVAHGLAWS…KHIRQQHSEE (191 aa)) are cyclic dinucleotide-binding domain (CBD). 2',3'-cGAMP contacts are provided by serine 144, tyrosine 149, arginine 220, and threonine 245. Residues serine 144, tyrosine 149, 220–223 (RVFK), and threonine 245 contribute to the 3',3'-c-di-GMP site.

This sequence belongs to the STING family. In terms of assembly, homodimer; forms a homodimer in absence of cyclic nucleotide (c-di-GMP or cGAMP). Homotetramer; in presence of cyclic nucleotide (c-di-GMP or cGAMP), forms tetramers and higher-order oligomers through side-by-side packing.

The protein resides in the endoplasmic reticulum membrane. It is found in the cytoplasm. It localises to the perinuclear region. Its subcellular location is the endoplasmic reticulum-Golgi intermediate compartment membrane. The protein localises to the golgi apparatus membrane. The protein resides in the cytoplasmic vesicle. It is found in the autophagosome membrane. The enzyme catalyses H(+)(in) = H(+)(out). In terms of biological role, sensor of cytosolic DNA from bacteria and viruses that promotes autophagy. Acts by recognizing and binding cyclic GMP-AMP (cGAMP), a messenger produced by CGAS in response to DNA in the cytosol. Exhibits guanine base-specific ligand recognition: binds 3'-3'linked cGAMP, 2'-3' linked cGAMP and 3'-3' linked c-di-GMP with much greater affinity as compared to 3'-3' linked c-di-AMP. Following cGAMP-binding, promotes the formation of autophagosomes, leading to target cytosolic DNA for degradation by the lysosome. Promotes autophagy by acting as a proton channel that directs proton efflux from the Golgi to facilitate LC3 lipidation. Lacks the C-terminal tail (CTT) found in other vertebrate orthologs which is essential for interferon signaling. This Xenopus tropicalis (Western clawed frog) protein is Stimulator of interferon genes protein.